A 287-amino-acid polypeptide reads, in one-letter code: Mu-like prophage FluMu DNA transposition protein B (287 aa).

Residues 7–62 form the HTH cro/C1-type domain; that stretch reads LKQHLSDSQITQAQLAREAGVNAGALSAYLNDNYKGNIADVEAKLAAYLEKKAVQA. The H-T-H motif DNA-binding region spans 18-37; it reads QAQLAREAGVNAGALSAYLN. 98–105 contacts ATP; the sequence is GMSGVGKT.

This protein is a non-specific DNA-binding and ATP-hydrolyzing protein essential for bacteriophage integration and replication. This chain is Mu-like prophage FluMu DNA transposition protein B, found in Haemophilus influenzae (strain ATCC 51907 / DSM 11121 / KW20 / Rd).